Here is a 225-residue protein sequence, read N- to C-terminus: Iron-sulfur flavoprotein CD630_04720 (225 aa).

[4Fe-4S] cluster contacts are provided by cysteine 49, cysteine 52, cysteine 55, and cysteine 61.

This sequence belongs to the SsuE family. Isf subfamily. As to quaternary structure, homodimer. Requires FMN as cofactor. It depends on [4Fe-4S] cluster as a cofactor.

Redox-active protein probably involved in electron transport. The sequence is that of Iron-sulfur flavoprotein CD630_04720 from Clostridioides difficile (strain 630) (Peptoclostridium difficile).